Here is a 156-residue protein sequence, read N- to C-terminus: Ribosomal RNA large subunit methyltransferase H (156 aa).

S-adenosyl-L-methionine is bound by residues leucine 73, glycine 104, and 123–128 (LSPLTL).

It belongs to the RNA methyltransferase RlmH family. Homodimer.

Its subcellular location is the cytoplasm. The catalysed reaction is pseudouridine(1915) in 23S rRNA + S-adenosyl-L-methionine = N(3)-methylpseudouridine(1915) in 23S rRNA + S-adenosyl-L-homocysteine + H(+). Specifically methylates the pseudouridine at position 1915 (m3Psi1915) in 23S rRNA. This chain is Ribosomal RNA large subunit methyltransferase H, found in Pectobacterium carotovorum subsp. carotovorum (strain PC1).